We begin with the raw amino-acid sequence, 369 residues long: Protein RecA (369 aa).

An ATP-binding site is contributed by 66–73 (GPESSGKT). Positions 328–369 (GIDAESLEEKEDPEKVKEQRAKKAAPGEEKPAEPASPEKTDK) are disordered. Residues 339–369 (DPEKVKEQRAKKAAPGEEKPAEPASPEKTDK) are compositionally biased toward basic and acidic residues.

The protein belongs to the RecA family.

The protein localises to the cytoplasm. Its function is as follows. Can catalyze the hydrolysis of ATP in the presence of single-stranded DNA, the ATP-dependent uptake of single-stranded DNA by duplex DNA, and the ATP-dependent hybridization of homologous single-stranded DNAs. It interacts with LexA causing its activation and leading to its autocatalytic cleavage. The sequence is that of Protein RecA from Lactobacillus delbrueckii subsp. bulgaricus (strain ATCC BAA-365 / Lb-18).